Reading from the N-terminus, the 341-residue chain is Solute carrier family 25 member 43 (341 aa).

Solcar repeat units follow at residues T11–L101, S105–Y185, and S200–N298. 6 helical membrane-spanning segments follow: residues L16–A36, L68–A88, I110–I130, G166–M186, F205–V225, and V262–V282.

It belongs to the mitochondrial carrier (TC 2.A.29) family.

The protein localises to the mitochondrion inner membrane. This chain is Solute carrier family 25 member 43 (Slc25a43), found in Mus musculus (Mouse).